Reading from the N-terminus, the 569-residue chain is Matrix metalloproteinase-21 (569 aa).

Positions 1 to 24 (MLAASIFRPTLLLCWLAAPWPTQP) are cleaved as a signal peptide. Positions 25-144 (ESLFHSRDRS…GPPPRARSRR (120 aa)) are excised as a propeptide. The short motif at 115–122 (PRCGVPDM) is the Cysteine switch element. A disordered region spans residues 115 to 166 (PRCGVPDMRPPPPSAPPSPPGPPPRARSRRSPRAPLSLSRRGWQPRGYPDGG). C117 is a binding site for Zn(2+). The span at 122–139 (MRPPPPSAPPSPPGPPPR) shows a compositional bias: pro residues. Positions 147–156 (RAPLSLSRRG) are enriched in low complexity. H283 contributes to the Zn(2+) binding site. E284 is a catalytic residue. Residues H287 and H293 each coordinate Zn(2+). An intrachain disulfide couples C329 to C560. 4 Hemopexin repeats span residues 330–389 (EGSF…WPGI), 391–447 (THNI…FPGI), 448–496 (PSPL…FPAV), and 503–559 (FRNI…WFDV). N-linked (GlcNAc...) asparagine glycosylation occurs at N372.

Belongs to the peptidase M10A family. Requires Zn(2+) as cofactor. The cofactor is Ca(2+). In terms of processing, the precursor is cleaved by a furin endopeptidase. Identified in fetal brain, kidney and liver. In adult tissues found primarily in ovary, kidney, liver, lung, placenta, brain and peripheral blood leukocytes. Expressed as well in various cancer cell lines.

It localises to the secreted. Functionally, plays a specialized role in the generation of left-right asymmetry during embryogenesis. May act as a negative regulator of the NOTCH-signaling pathway. Cleaves alpha-1-antitrypsin. This chain is Matrix metalloproteinase-21 (MMP21), found in Homo sapiens (Human).